Consider the following 331-residue polypeptide: Aspartate carbamoyltransferase catalytic subunit (331 aa).

Carbamoyl phosphate contacts are provided by R76 and T77. Residue K104 participates in L-aspartate binding. Residues R126, H154, and Q157 each contribute to the carbamoyl phosphate site. Residues R187 and R246 each contribute to the L-aspartate site. 2 residues coordinate carbamoyl phosphate: G287 and P288.

This sequence belongs to the aspartate/ornithine carbamoyltransferase superfamily. ATCase family. As to quaternary structure, heterododecamer (2C3:3R2) of six catalytic PyrB chains organized as two trimers (C3), and six regulatory PyrI chains organized as three dimers (R2).

The enzyme catalyses carbamoyl phosphate + L-aspartate = N-carbamoyl-L-aspartate + phosphate + H(+). The protein operates within pyrimidine metabolism; UMP biosynthesis via de novo pathway; (S)-dihydroorotate from bicarbonate: step 2/3. In terms of biological role, catalyzes the condensation of carbamoyl phosphate and aspartate to form carbamoyl aspartate and inorganic phosphate, the committed step in the de novo pyrimidine nucleotide biosynthesis pathway. The sequence is that of Aspartate carbamoyltransferase catalytic subunit from Dehalococcoides mccartyi (strain CBDB1).